A 304-amino-acid chain; its full sequence is Olfactory receptor 52A4 (304 aa).

Residues 1-32 (MALPITNGTLFMPFVLTFIGIPGFESVQCWIG) lie on the Extracellular side of the membrane. N-linked (GlcNAc...) asparagine glycosylation is present at Asn7. Residues 33-53 (IPFCATYVIALIGNSLLLIII) traverse the membrane as a helical segment. Topologically, residues 54–61 (KSEPSLHE) are cytoplasmic. The chain crosses the membrane as a helical span at residues 62 to 82 (PMYIFLATLGATDISLSTSIV). The Extracellular portion of the chain corresponds to 83 to 103 (PKMLDIFWFHLPEIYFDACLF). A disulfide bond links Cys101 and Cys184. Residues 104 to 124 (QMWLIHTFQGIESGVLLAMAL) traverse the membrane as a helical segment. Over 125–146 (DRCVAICYPLRRAIVFTRQLVT) the chain is Cytoplasmic. Residues 147–167 (YIVVGVTLRPAILVIPCLLLI) traverse the membrane as a helical segment. Topologically, residues 168-203 (KCHLKLYRTKLIYHTYCERVALVKLATEDVYINKVY) are extracellular. Residues 204–224 (GILGAFIVGGLDFIFITLSYI) form a helical membrane-spanning segment. Over 225–255 (QIFITVFHLPLKEARLKVFNTCIPHIYVFFQ) the chain is Cytoplasmic. A helical membrane pass occupies residues 256–276 (FYLLAFFFIFYSQIWILYPII). Over 277 to 279 (CTY) the chain is Extracellular. Residues 280 to 300 (HLVQSLPTGPTIPQPLYLWVK) form a helical membrane-spanning segment. At 301-304 (DQTH) the chain is on the cytoplasmic side.

The protein belongs to the G-protein coupled receptor 1 family.

It is found in the cell membrane. Functionally, odorant receptor. The chain is Olfactory receptor 52A4 from Homo sapiens (Human).